We begin with the raw amino-acid sequence, 694 residues long: Polyphosphate kinase (694 aa).

Position 45 (Asn45) interacts with ATP. Arg367 and Arg397 together coordinate Mg(2+). The active-site Phosphohistidine intermediate is His427. 3 residues coordinate ATP: Tyr460, Arg553, and His580.

This sequence belongs to the polyphosphate kinase 1 (PPK1) family. Mg(2+) is required as a cofactor. An intermediate of this reaction is the autophosphorylated ppk in which a phosphate is covalently linked to a histidine residue through a N-P bond.

It carries out the reaction [phosphate](n) + ATP = [phosphate](n+1) + ADP. Functionally, catalyzes the reversible transfer of the terminal phosphate of ATP to form a long-chain polyphosphate (polyP). The sequence is that of Polyphosphate kinase from Campylobacter jejuni subsp. doylei (strain ATCC BAA-1458 / RM4099 / 269.97).